A 158-amino-acid polypeptide reads, in one-letter code: NAD(P)H-quinone oxidoreductase subunit J, chloroplastic (158 aa).

This sequence belongs to the complex I 30 kDa subunit family. As to quaternary structure, NDH is composed of at least 16 different subunits, 5 of which are encoded in the nucleus.

The protein resides in the plastid. The protein localises to the chloroplast thylakoid membrane. It carries out the reaction a plastoquinone + NADH + (n+1) H(+)(in) = a plastoquinol + NAD(+) + n H(+)(out). It catalyses the reaction a plastoquinone + NADPH + (n+1) H(+)(in) = a plastoquinol + NADP(+) + n H(+)(out). In terms of biological role, NDH shuttles electrons from NAD(P)H:plastoquinone, via FMN and iron-sulfur (Fe-S) centers, to quinones in the photosynthetic chain and possibly in a chloroplast respiratory chain. The immediate electron acceptor for the enzyme in this species is believed to be plastoquinone. Couples the redox reaction to proton translocation, and thus conserves the redox energy in a proton gradient. This chain is NAD(P)H-quinone oxidoreductase subunit J, chloroplastic, found in Illicium oligandrum (Star anise).